Consider the following 902-residue polypeptide: Viral-enhancing factor (902 aa).

A Peptidase M60 domain is found at 27–330 (HRRTEVGVVL…IFAWLYNPQR (304 aa)). N-linked (GlcNAc...) asparagine; by host glycosylation is found at Asn73, Asn265, Asn278, Asn339, Asn540, Asn593, Asn594, Asn620, Asn782, and Asn840.

Its function is as follows. Involved in disruption of the peritrophic membrane and fusion of nucleocapsids with midgut cells. This is Viral-enhancing factor (VEF) from Heliothis (HaGV).